Here is a 171-residue protein sequence, read N- to C-terminus: Large ribosomal subunit protein uL10 (171 aa).

It belongs to the universal ribosomal protein uL10 family. In terms of assembly, part of the ribosomal stalk of the 50S ribosomal subunit. The N-terminus interacts with L11 and the large rRNA to form the base of the stalk. The C-terminus forms an elongated spine to which L12 dimers bind in a sequential fashion forming a multimeric L10(L12)X complex.

In terms of biological role, forms part of the ribosomal stalk, playing a central role in the interaction of the ribosome with GTP-bound translation factors. The protein is Large ribosomal subunit protein uL10 of Phenylobacterium zucineum (strain HLK1).